Consider the following 864-residue polypeptide: Disintegrin and metalloproteinase domain-containing protein 15 (864 aa).

An N-terminal signal peptide occupies residues 1-17 (MRLALLWALGLLGAGSP). Residues 18–45 (RPSPPLPNIGGTEEEQQASPERTLSGSM) form a disordered region. The propeptide occupies 18–207 (RPSPPLPNIG…EQHHAHRLKR (190 aa)). Positions 34–45 (QASPERTLSGSM) are enriched in polar residues. The Cysteine switch signature appears at 177-184 (HTCAPSWH). Position 179 (Cys179) interacts with Zn(2+). The Extracellular portion of the chain corresponds to 208–696 (DVVTETKIVE…TQLKATSSLT (489 aa)). One can recognise a Peptidase M12B domain in the interval 214 to 415 (KIVELVIVAD…GMGSCLFERQ (202 aa)). Residue Asn238 is glycosylated (N-linked (GlcNAc...) asparagine). 4 cysteine pairs are disulfide-bonded: Cys324–Cys410, Cys366–Cys394, Cys368–Cys377, and Cys481–Cys501. Residue His349 coordinates Zn(2+). Glu350 is an active-site residue. Residues His353 and His359 each contribute to the Zn(2+) site. Residues Asn390 and Asn393 are each glycosylated (N-linked (GlcNAc...) asparagine). The Disintegrin domain occupies 422-509 (SSLCGNMFVD…QCPSDIRLGD (88 aa)). N-linked (GlcNAc...) asparagine glycosylation is found at Asn607 and Asn612. 3 cysteine pairs are disulfide-bonded: Cys658–Cys668, Cys662–Cys674, and Cys676–Cys685. The region spanning 658-686 (CRRKCHGHGVCDSSGHCRCEEGWAPPDCM) is the EGF-like domain. Residues 697–717 (TGLLLSLLLLLVLVLLGASYW) traverse the membrane as a helical segment. Tyr716 and Tyr736 each carry phosphotyrosine; by HCK and LCK. Residues 718–864 (HRARLHQRLC…PPPAASSLYL (147 aa)) are Cytoplasmic-facing. Positions 736 to 864 (YRAPQSCPPE…PPPAASSLYL (129 aa)) are disordered. The span at 741–750 (SCPPERPGPP) shows a compositional bias: pro residues. Over residues 752-762 (RAQQMTGTKQA) the composition is skewed to polar residues. 2 stretches are compositionally biased toward pro residues: residues 768–780 (PVPPSRPLPPNPV) and 814–825 (TKPPPPRKPLPA). 2 consecutive short sequence motifs (SH3-binding) follow at residues 816-822 (PPPPRKP) and 851-857 (RPAPPPP).

In terms of assembly, interacts specifically with Src family protein-tyrosine kinases (PTKs). Interacts with ITAGV-ITGB3 (vitronectin receptor). Interacts with SH3GL2 and SNX9; this interaction occurs preferentially with ADAM15 precursor, rather than the processed form, suggesting it occurs in a secretory pathway compartment prior to the medial Golgi. Interacts with ITAG9-ITGB1. Interacts with SH3PXD2A. Interacts with ITAGV-ITGB1. Interacts with GRB2, HCK, ITSN1, ITSN2, LYN, MAPK1, MAPK3, NCF1, NCK1, nephrocystin, PTK6, SNX33, LCK and SRC. Requires Zn(2+) as cofactor. Post-translationally, the precursor is cleaved by a furin endopeptidase. An additional membrane proximal site of cleavage affects a small percentage of the proteins and results in disulfide-linked fragments. The prodomain is apparently cleaved in several positions that are N-terminal of the furin cleavage site. May be partially sialylated. In terms of processing, phosphorylation increases association with PTKs. As to expression, expressed moderately in pericytes of retina. Expressed in testis and in spermatozoa from the caput, corpus, and cauda epididymis, as well as in non-capacitated and acrosome-reacted sperm (at protein level). Highly expressed in heart, brain, lung, and kidney. Expressed at lower levels in spleen, liver, testis and muscle.

It localises to the endomembrane system. It is found in the cell junction. Its subcellular location is the adherens junction. The protein resides in the cell projection. The protein localises to the cilium. It localises to the flagellum. It is found in the cytoplasmic vesicle. Its subcellular location is the secretory vesicle. The protein resides in the acrosome. In terms of biological role, active metalloproteinase with gelatinolytic and collagenolytic activity. Plays a role in the wound healing process. Mediates both heterotypic intraepithelial cell/T-cell interactions and homotypic T-cell aggregation. Inhibits beta-1 integrin-mediated cell adhesion and migration of airway smooth muscle cells. Suppresses cell motility on or towards fibronectin possibly by driving alpha-v/beta-1 integrin (ITAGV-ITGB1) cell surface expression via ERK1/2 inactivation. Cleaves E-cadherin in response to growth factor deprivation. Plays a role in glomerular cell migration. Plays a role in pathological neovascularization. May play a role in cartilage remodeling. May be proteolytically processed, during sperm epididymal maturation and the acrosome reaction. May play a role in sperm-egg binding through its disintegrin domain. Interactions with egg membrane could be mediated via binding between the disintegrin-like domain to one or more integrin receptors on the egg. The polypeptide is Disintegrin and metalloproteinase domain-containing protein 15 (Adam15) (Mus musculus (Mouse)).